The primary structure comprises 362 residues: Probable cysteine protease RDL2 (362 aa).

The N-terminal stretch at 1 to 28 (MAATPIRVIVSALVILSVLLLSSSLGVA) is a signal peptide. The propeptide at 29–129 (TETEIERNET…ERYLYKEGDV (101 aa)) is activation peptide. Asn36 carries N-linked (GlcNAc...) asparagine glycosylation. 2 cysteine pairs are disulfide-bonded: Cys151-Cys194 and Cys185-Cys228. The active site involves Cys154. A glycan (N-linked (GlcNAc...) asparagine) is linked at Asn234. A disulfide bridge links Cys287 with Cys338. Catalysis depends on residues His293 and Asn313.

This sequence belongs to the peptidase C1 family.

Its function is as follows. Probable thiol protease. This is Probable cysteine protease RDL2 from Arabidopsis thaliana (Mouse-ear cress).